Consider the following 357-residue polypeptide: MAAAAKPKNLSLVVHGPGDLRLENYPIPEPGPNEVLLRMHSVGICGSDVHYWEEGRIGNFIVKKPMVLGHEASGTVEKVGSLVKHLKPGDRVAIEPGVPRENDEFCKSGRYNLSPSIFFCATPPDDGNLCRFYKHNAAFCYKLPDNVTFEEGALIEPLSVGIHACRRGGVTLGHRVLVCGAGPIGVVSLLVAKAMGAAQVVVTDLSAPRLSKAKEIGADLVLQISKESPQEIAGKVEGLLGCKPEVTIECTGAEASIQAGIYATRSGGTLVLVGLGSEMTTIPLLHAAVREVDIKGVFRYCNTWPVAISMLASKSVNIKPLVTHRFPLEKALEAFETFKKGLGLKIMLKCDPNDQNP.

Ala-2 bears the N-acetylalanine mark. Position 45 (Cys-45) interacts with Zn(2+). Substrate is bound at residue Tyr-51. Zn(2+)-binding residues include His-70 and Glu-71. Glu-156 contacts substrate. Ile-184, Asp-204, and Arg-209 together coordinate NAD(+). Residues Ser-211 and Ser-225 each carry the phosphoserine modification. NAD(+) contacts are provided by residues 273-275 (VGL) and 297-299 (VFR). Residues Arg-299 and Tyr-300 each coordinate substrate.

The protein belongs to the zinc-containing alcohol dehydrogenase family. As to quaternary structure, homotetramer. Requires Zn(2+) as cofactor.

The protein localises to the mitochondrion membrane. Its subcellular location is the cell projection. The protein resides in the cilium. It localises to the flagellum. It catalyses the reaction xylitol + NAD(+) = D-xylulose + NADH + H(+). The enzyme catalyses L-iditol + NAD(+) = keto-L-sorbose + NADH + H(+). The catalysed reaction is keto-D-fructose + NADH + H(+) = D-sorbitol + NAD(+). Polyol dehydrogenase that catalyzes the reversible NAD(+)-dependent oxidation of various sugar alcohols. Is active with xylitol, L-iditol and D-sorbitol (D-glucitol) as substrates, leading to the C2-oxidized products D-xylulose, L-sorbose and D-fructose, respectively. Is a key enzyme in the polyol pathway that interconverts glucose and fructose via sorbitol, which constitutes an important alternate route for glucose metabolism. May play a role in sperm motility by using sorbitol as an alternative energy source for sperm motility. This is Sorbitol dehydrogenase (SORD) from Macaca fascicularis (Crab-eating macaque).